The following is a 151-amino-acid chain: Ribosome maturation factor RimP (151 aa).

This sequence belongs to the RimP family.

The protein localises to the cytoplasm. Required for maturation of 30S ribosomal subunits. The sequence is that of Ribosome maturation factor RimP from Vibrio campbellii (strain ATCC BAA-1116).